Consider the following 401-residue polypeptide: S-adenosylmethionine synthase (401 aa).

An ATP-binding site is contributed by Gly135 to Asp140.

This sequence belongs to the AdoMet synthase 2 family. Mg(2+) serves as cofactor.

The catalysed reaction is L-methionine + ATP + H2O = S-adenosyl-L-methionine + phosphate + diphosphate. It functions in the pathway amino-acid biosynthesis; S-adenosyl-L-methionine biosynthesis; S-adenosyl-L-methionine from L-methionine: step 1/1. Functionally, catalyzes the formation of S-adenosylmethionine from methionine and ATP. The sequence is that of S-adenosylmethionine synthase from Methanobrevibacter smithii (strain ATCC 35061 / DSM 861 / OCM 144 / PS).